We begin with the raw amino-acid sequence, 503 residues long: tRNA-2-methylthio-N(6)-dimethylallyladenosine synthase (503 aa).

Residues R5–H121 form the MTTase N-terminal domain. Residues C14, C50, C84, C158, C162, and C165 each contribute to the [4Fe-4S] cluster site. A Radical SAM core domain is found at R144 to A380. One can recognise a TRAM domain in the interval R383–V453.

It belongs to the methylthiotransferase family. MiaB subfamily. In terms of assembly, monomer. It depends on [4Fe-4S] cluster as a cofactor.

It localises to the cytoplasm. The enzyme catalyses N(6)-dimethylallyladenosine(37) in tRNA + (sulfur carrier)-SH + AH2 + 2 S-adenosyl-L-methionine = 2-methylsulfanyl-N(6)-dimethylallyladenosine(37) in tRNA + (sulfur carrier)-H + 5'-deoxyadenosine + L-methionine + A + S-adenosyl-L-homocysteine + 2 H(+). Functionally, catalyzes the methylthiolation of N6-(dimethylallyl)adenosine (i(6)A), leading to the formation of 2-methylthio-N6-(dimethylallyl)adenosine (ms(2)i(6)A) at position 37 in tRNAs that read codons beginning with uridine. The protein is tRNA-2-methylthio-N(6)-dimethylallyladenosine synthase of Nocardia farcinica (strain IFM 10152).